A 273-amino-acid polypeptide reads, in one-letter code: Putative phosphoenolpyruvate synthase regulatory protein (273 aa).

153-160 (AVSRAGKT) is an ADP binding site.

Belongs to the pyruvate, phosphate/water dikinase regulatory protein family. PSRP subfamily.

The enzyme catalyses [pyruvate, water dikinase] + ADP = [pyruvate, water dikinase]-phosphate + AMP + H(+). The catalysed reaction is [pyruvate, water dikinase]-phosphate + phosphate + H(+) = [pyruvate, water dikinase] + diphosphate. Bifunctional serine/threonine kinase and phosphorylase involved in the regulation of the phosphoenolpyruvate synthase (PEPS) by catalyzing its phosphorylation/dephosphorylation. In Xylella fastidiosa (strain M12), this protein is Putative phosphoenolpyruvate synthase regulatory protein.